The following is a 74-amino-acid chain: Cecropin-P4 (74 aa).

The N-terminal stretch at 1–13 (MFLMYLLVQTTES) is a signal peptide. Positions 45–74 (HRRSVAHQEEASLHVKTDELPSPDTVREQL) are cleaved as a propeptide — removed in mature form. Residues 51–74 (HQEEASLHVKTDELPSPDTVREQL) form a disordered region.

This sequence belongs to the cecropin family. Expressed in the body wall, intestine, uterus and ovary.

It is found in the secreted. Functionally, has antibacterial activity against several Gram-positive and Gram-negative bacteria. Is weakly active against yeasts. Acts by a nonpore mechanism. The protein is Cecropin-P4 (ASCEC-4) of Ascaris suum (Pig roundworm).